A 431-amino-acid polypeptide reads, in one-letter code: ATP-dependent protease ATPase subunit HslU (431 aa).

ATP contacts are provided by residues V18, 60–65, D244, E309, and R381; that span reads GVGKTE.

This sequence belongs to the ClpX chaperone family. HslU subfamily. A double ring-shaped homohexamer of HslV is capped on each side by a ring-shaped HslU homohexamer. The assembly of the HslU/HslV complex is dependent on binding of ATP.

The protein localises to the cytoplasm. ATPase subunit of a proteasome-like degradation complex; this subunit has chaperone activity. The binding of ATP and its subsequent hydrolysis by HslU are essential for unfolding of protein substrates subsequently hydrolyzed by HslV. HslU recognizes the N-terminal part of its protein substrates and unfolds these before they are guided to HslV for hydrolysis. In Caulobacter sp. (strain K31), this protein is ATP-dependent protease ATPase subunit HslU.